A 278-amino-acid polypeptide reads, in one-letter code: Outer spore wall protein 1 (278 aa).

Its subcellular location is the spore wall. In terms of biological role, may be involved in a late step of spore wall assembly. This chain is Outer spore wall protein 1 (OSW1), found in Saccharomyces cerevisiae (strain ATCC 204508 / S288c) (Baker's yeast).